A 35-amino-acid polypeptide reads, in one-letter code: Beta-amanitin proprotein (35 aa).

Residues 1–10 (MSDINATRLP) constitute a propeptide that is removed on maturation. Residues 11-18 (IWGIGCDP) constitute a cross-link (cyclopeptide (Ile-Pro)). A cross-link (2'-cysteinyl-6'-hydroxytryptophan sulfoxide (Trp-Cys)) is located at residues 12-16 (WGIGC). A propeptide spanning residues 19–35 (CVGDDVTALLTRGEALC) is cleaved from the precursor.

This sequence belongs to the MSDIN fungal toxin family. Processed by the macrocyclase-peptidase enzyme POPB to yield a toxic cyclic octapeptide. POPB first removes 10 residues from the N-terminus. Conformational trapping of the remaining peptide forces the enzyme to release this intermediate rather than proceed to macrocyclization. The enzyme rebinds the remaining peptide in a different conformation and catalyzes macrocyclization of the N-terminal 8 residues. Expressed in basidiocarps.

Its function is as follows. Toxin belonging to the bicyclic octapeptides amatoxins that acts by binding non-competitively to RNA polymerase II and greatly slowing the elongation of transcripts from target promoters. In Amanita exitialis (Guangzhou destroying angel), this protein is Beta-amanitin proprotein.